A 583-amino-acid polypeptide reads, in one-letter code: Selenocysteine-specific elongation factor (583 aa).

Residues R5–T203 enclose the tr-type G domain. The G1 stretch occupies residues G14–T21. Residues G19, T21, and A22 each contribute to the GTP site. T21 contacts Mg(2+). The segment at G46–D50 is G2. Residues T48 and D78 each coordinate Mg(2+). Residues D78–G81 are G3. The tract at residues N132–D135 is G4. GTP contacts are provided by D135 and K173. Residues A171–K173 form a G5 region. The interval M371–G390 is disordered. S524 is modified (phosphoserine). Positions K528–V562 are disordered. Position 532 is a phosphothreonine (T532). A Nuclear localization signal motif is present at residues T534–R540. A compositionally biased stretch (basic and acidic residues) spans G542 to E557. R543 carries the omega-N-methylarginine modification.

This sequence belongs to the TRAFAC class translation factor GTPase superfamily. Classic translation factor GTPase family. SelB subfamily. Mg(2+) is required as a cofactor. The cofactor is Mn(2+).

The protein localises to the cytoplasm. The protein resides in the nucleus. It carries out the reaction GTP + H2O = GDP + phosphate + H(+). Its function is as follows. Translation factor required for the incorporation of the rare amino acid selenocysteine encoded by UGA codons. Replaces the eRF1-eRF3-GTP ternary complex for the insertion of selenocysteine directed by the UGA codon. Insertion of selenocysteine at UGA codons is mediated by SECISBP2 and EEFSEC: SECISBP2 (1) specifically binds the SECIS sequence once the 80S ribosome encounters an in-frame UGA codon and (2) contacts the RPS27A/eS31 of the 40S ribosome before ribosome stalling. (3) GTP-bound EEFSEC then delivers selenocysteinyl-tRNA(Sec) to the 80S ribosome and adopts a preaccommodated state conformation. (4) After GTP hydrolysis, EEFSEC dissociates from the assembly, selenocysteinyl-tRNA(Sec) accommodates, and peptide bond synthesis and selenoprotein elongation occur. The polypeptide is Selenocysteine-specific elongation factor (Eefsec) (Mus musculus (Mouse)).